Consider the following 355-residue polypeptide: Peptide chain release factor 1 (355 aa).

The residue at position 233 (glutamine 233) is an N5-methylglutamine.

The protein belongs to the prokaryotic/mitochondrial release factor family. In terms of processing, methylated by PrmC. Methylation increases the termination efficiency of RF1.

The protein resides in the cytoplasm. Its function is as follows. Peptide chain release factor 1 directs the termination of translation in response to the peptide chain termination codons UAG and UAA. The polypeptide is Peptide chain release factor 1 (Amoebophilus asiaticus (strain 5a2)).